The sequence spans 132 residues: Small ribosomal subunit protein uS8 (132 aa).

The protein belongs to the universal ribosomal protein uS8 family. Part of the 30S ribosomal subunit. Contacts proteins S5 and S12.

Functionally, one of the primary rRNA binding proteins, it binds directly to 16S rRNA central domain where it helps coordinate assembly of the platform of the 30S subunit. This is Small ribosomal subunit protein uS8 from Brucella anthropi (strain ATCC 49188 / DSM 6882 / CCUG 24695 / JCM 21032 / LMG 3331 / NBRC 15819 / NCTC 12168 / Alc 37) (Ochrobactrum anthropi).